A 356-amino-acid chain; its full sequence is UDP-N-acetylglucosamine--N-acetylmuramyl-(pentapeptide) pyrophosphoryl-undecaprenol N-acetylglucosamine transferase (356 aa).

UDP-N-acetyl-alpha-D-glucosamine contacts are provided by residues 12–14, Asn-124, Arg-163, Ser-188, Ile-242, 261–266, and Gln-287; these read TGG and ALTVSE.

The protein belongs to the glycosyltransferase 28 family. MurG subfamily.

Its subcellular location is the cell inner membrane. The catalysed reaction is di-trans,octa-cis-undecaprenyl diphospho-N-acetyl-alpha-D-muramoyl-L-alanyl-D-glutamyl-meso-2,6-diaminopimeloyl-D-alanyl-D-alanine + UDP-N-acetyl-alpha-D-glucosamine = di-trans,octa-cis-undecaprenyl diphospho-[N-acetyl-alpha-D-glucosaminyl-(1-&gt;4)]-N-acetyl-alpha-D-muramoyl-L-alanyl-D-glutamyl-meso-2,6-diaminopimeloyl-D-alanyl-D-alanine + UDP + H(+). It participates in cell wall biogenesis; peptidoglycan biosynthesis. Its function is as follows. Cell wall formation. Catalyzes the transfer of a GlcNAc subunit on undecaprenyl-pyrophosphoryl-MurNAc-pentapeptide (lipid intermediate I) to form undecaprenyl-pyrophosphoryl-MurNAc-(pentapeptide)GlcNAc (lipid intermediate II). This Pseudomonas fluorescens (strain SBW25) protein is UDP-N-acetylglucosamine--N-acetylmuramyl-(pentapeptide) pyrophosphoryl-undecaprenol N-acetylglucosamine transferase.